A 353-amino-acid chain; its full sequence is Protein RecA (353 aa).

65-72 (GPESSGKT) is a binding site for ATP.

This sequence belongs to the RecA family.

The protein resides in the cytoplasm. In terms of biological role, can catalyze the hydrolysis of ATP in the presence of single-stranded DNA, the ATP-dependent uptake of single-stranded DNA by duplex DNA, and the ATP-dependent hybridization of homologous single-stranded DNAs. It interacts with LexA causing its activation and leading to its autocatalytic cleavage. This is Protein RecA from Aeromonas salmonicida (strain A449).